The following is a 379-amino-acid chain: Odorant receptor 23a (379 aa).

Topologically, residues 1 to 36 (MKLSETLKIDYFRVQLNAWRICGALDLSEGRYWSWS) are cytoplasmic. Residues 37–57 (MLLCILVYLPTPMLLRGVYSF) traverse the membrane as a helical segment. The Extracellular portion of the chain corresponds to 58 to 64 (EDPVENN). A glycan (N-linked (GlcNAc...) asparagine) is linked at Asn-64. Residues 65–85 (FSLSLTVTSLSNLMKFCMYVA) form a helical membrane-spanning segment. Topologically, residues 86–125 (QLTKMVEVQSLIGQLDARVSGESQSERHRNMTEHLLRMSK) are cytoplasmic. Residues 126 to 146 (LFQITYAVVFIIAAVPFVFET) form a helical membrane-spanning segment. At 147–162 (ELSLPMPMWFPFDWKN) the chain is on the extracellular side. A helical membrane pass occupies residues 163–183 (SMVAYIGALVFQEIGYVFQIM). The Cytoplasmic segment spans residues 184–253 (QCFAADSFPP…TKSLVSYPMM (70 aa)). The helical transmembrane segment at 254–274 (VQFMVIGINIAITLFVLIFYV) threads the bilayer. The Extracellular segment spans residues 275–280 (ETLYDR). Residues 281-301 (IYYLCFLLGITVQTYPLCYYG) form a helical membrane-spanning segment. Topologically, residues 302–340 (TMVQESFAELHYAVFCSNWVDQSASYRGHMLILAERTKR) are cytoplasmic. The chain crosses the membrane as a helical span at residues 341–361 (MQLLLAGNLVPIHLSTYVACW). Residues 362–379 (KGAYSFFTLMADRDGLGS) are Extracellular-facing.

The protein belongs to the insect chemoreceptor superfamily. Heteromeric odorant receptor channel (TC 1.A.69) family. Or2a subfamily. In terms of assembly, interacts with Orco. Complexes exist early in the endomembrane system in olfactory sensory neurons (OSNs), coupling these complexes to the conserved ciliary trafficking pathway. As to expression, expressed in 10-40 sensory cells in the third antenna segment and in the maxillary palp.

It is found in the cell membrane. Odorant receptor which mediates acceptance or avoidance behavior, depending on its substrates. The odorant receptor repertoire encodes a large collection of odor stimuli that vary widely in identity, intensity, and duration. May form a complex with Orco to form odorant-sensing units, providing sensitive and prolonged odorant signaling and calcium permeability. This chain is Odorant receptor 23a (Or23a), found in Drosophila melanogaster (Fruit fly).